A 309-amino-acid chain; its full sequence is General transcription factor IIH subunit 3 (309 aa).

The segment at 269–286 (CSVCLSIFCNFSPICTTC) adopts a C4-type zinc-finger fold.

The protein belongs to the TFB4 family. Part of a TFIID-containing RNA polymerase II pre-initiation complex that is composed of TBP and at least GTF2A1, GTF2A2, GTF2E1, GTF2E2, GTF2F1, GTF2H2, GTF2H3, GTF2H4, GTF2H5, GTF2B, TCEA1, ERCC2, ERCC3, TAF1, TAF2, TAF3, TAF4, TAF5, TAF6, TAF7, TAF8, TAF9, TAF10, TAF11, TAF12 and TAF13. Component of the 7-subunit TFIIH core complex composed of XPB/ERCC3, XPD/ERCC2, GTF2H1, GTF2H2, GTF2H3, GTF2H4 and GTF2H5, which is active in NER. The core complex associates with the 3-subunit CDK-activating kinase (CAK) module composed of CCNH/cyclin H, CDK7 and MNAT1 to form the 10-subunit holoenzyme (holo-TFIIH) active in transcription. Interacts with RARA; the interaction requires prior phosphorylation of RARA on 'Ser-369' which then enhances interaction of RARA with CDK7.

The protein localises to the nucleus. Component of the general transcription and DNA repair factor IIH (TFIIH) core complex, which is involved in general and transcription-coupled nucleotide excision repair (NER) of damaged DNA and, when complexed to CAK, in RNA transcription by RNA polymerase II. In NER, TFIIH acts by opening DNA around the lesion to allow the excision of the damaged oligonucleotide and its replacement by a new DNA fragment. In transcription, TFIIH has an essential role in transcription initiation. When the pre-initiation complex (PIC) has been established, TFIIH is required for promoter opening and promoter escape. Phosphorylation of the C-terminal tail (CTD) of the largest subunit of RNA polymerase II by the kinase module CAK controls the initiation of transcription. This is General transcription factor IIH subunit 3 (Gtf2h3) from Rattus norvegicus (Rat).